A 442-amino-acid polypeptide reads, in one-letter code: 3-dehydroquinate synthase, chloroplastic (442 aa).

The N-terminal 61 residues, 1–61, are a transit peptide targeting the chloroplast; sequence MASSFCPKQA…TTRLKVLATS (61 aa). Residues N119, 150–152, K155, 183–188, 208–209, K221, K230, and 248–251 each bind NAD(+); these read DGE, GGVIGD, TT, and TLNT. E263 is a binding site for a divalent metal cation. K305 contributes to the NAD(+) binding site. A divalent metal cation contacts are provided by H326 and H343.

Belongs to the sugar phosphate cyclases superfamily. Dehydroquinate synthase family. As to quaternary structure, homodimer. A divalent metal cation serves as cofactor. The cofactor is NAD(+). As to expression, highly expressed in roots. Lower expression in stems, flowers and cotyledons. Barely detected in leaves.

The protein resides in the plastid. It localises to the chloroplast. The catalysed reaction is 7-phospho-2-dehydro-3-deoxy-D-arabino-heptonate = 3-dehydroquinate + phosphate. The protein operates within metabolic intermediate biosynthesis; chorismate biosynthesis; chorismate from D-erythrose 4-phosphate and phosphoenolpyruvate: step 2/7. In terms of biological role, catalyzes the second step in the shikimate pathway. The protein is 3-dehydroquinate synthase, chloroplastic (DHQS) of Solanum lycopersicum (Tomato).